Consider the following 423-residue polypeptide: Vitamin D3 receptor (423 aa).

Positions 24, 27, 41, 44, 60, 66, 76, and 79 each coordinate Zn(2+). NR C4-type zinc fingers lie at residues cysteine 24–cysteine 44 and cysteine 60–cysteine 84. Positions cysteine 24–methionine 89 form a DNA-binding region, nuclear receptor. The tract at residues aspartate 97–glutamate 126 is hinge. The NR LBD domain occupies glutamate 127 to glycine 419. A calcitriol-binding site is contributed by tyrosine 143. The interval methionine 159–serine 180 is disordered. Positions threonine 171–serine 180 are enriched in low complexity. Serine 233 serves as a coordination point for calcitriol. Positions lysine 242–lysine 260 are interaction with coactivator LXXLL motif. Arginine 270, serine 274, histidine 301, and histidine 393 together coordinate calcitriol. A 9aaTAD motif is present at residues proline 412–asparagine 420.

Belongs to the nuclear hormone receptor family. NR1 subfamily. Homodimer in the absence of bound vitamin D3. Heterodimer with RXRA after vitamin D3 binding. Interacts with MED1 and NCOA6. Interacts with MED1, NCOA1, NCOA2, NCOA3 and NCOA6 coactivators, leading to a strong increase of transcription of target genes. Interacts with the corepressor NCOR1. Interacts with SNW1. Interacts with IRX4, the interaction does not affect its transactivation activity. Interacts with CRY1. Interacts with CRY2 in a ligand-dependent manner. Post-translationally, ubiquitinated by UBR5, leading to its degradation: UBR5 specifically recognizes and binds ligand-bound VDR when it is not associated with coactivators (NCOAs). In presence of NCOAs, the UBR5-degron is not accessible, preventing its ubiquitination and degradation. As to expression, detected in intestine and kidney.

It is found in the nucleus. The protein localises to the cytoplasm. Its function is as follows. Nuclear receptor for calcitriol, the active form of vitamin D3 which mediates the action of this vitamin on cells. Enters the nucleus upon vitamin D3 binding where it forms heterodimers with the retinoid X receptor/RXR. The VDR-RXR heterodimers bind to specific response elements on DNA and activate the transcription of vitamin D3-responsive target genes. Plays a central role in calcium homeostasis. Also functions as a receptor for the secondary bile acid lithocholic acid (LCA) and its metabolites. This chain is Vitamin D3 receptor (Vdr), found in Rattus norvegicus (Rat).